A 474-amino-acid chain; its full sequence is 3-isopropylmalate dehydratase large subunit (474 aa).

Positions 353, 414, and 417 each coordinate [4Fe-4S] cluster.

Belongs to the aconitase/IPM isomerase family. LeuC type 1 subfamily. Heterodimer of LeuC and LeuD. [4Fe-4S] cluster is required as a cofactor.

It carries out the reaction (2R,3S)-3-isopropylmalate = (2S)-2-isopropylmalate. Its pathway is amino-acid biosynthesis; L-leucine biosynthesis; L-leucine from 3-methyl-2-oxobutanoate: step 2/4. In terms of biological role, catalyzes the isomerization between 2-isopropylmalate and 3-isopropylmalate, via the formation of 2-isopropylmaleate. This chain is 3-isopropylmalate dehydratase large subunit, found in Teredinibacter turnerae (strain ATCC 39867 / T7901).